Reading from the N-terminus, the 298-residue chain is Ethylmalonyl-CoA decarboxylase (298 aa).

It belongs to the enoyl-CoA hydratase/isomerase family.

The protein resides in the cytoplasm. The protein localises to the cytosol. The enzyme catalyses (2S)-ethylmalonyl-CoA + H(+) = butanoyl-CoA + CO2. The catalysed reaction is (S)-methylmalonyl-CoA + H(+) = propanoyl-CoA + CO2. It carries out the reaction (2R)-ethylmalonyl-CoA + H(+) = butanoyl-CoA + CO2. Functionally, decarboxylates ethylmalonyl-CoA, a potentially toxic metabolite, to form butyryl-CoA, suggesting it might be involved in metabolite proofreading. Acts preferentially on (S)-ethylmalonyl-CoA but also has some activity on the (R)-isomer. Also has methylmalonyl-CoA decarboxylase activity at lower level. The sequence is that of Ethylmalonyl-CoA decarboxylase (ECHDC1) from Gallus gallus (Chicken).